Consider the following 125-residue polypeptide: Small ribosomal subunit protein uS13 (125 aa).

The protein belongs to the universal ribosomal protein uS13 family. Part of the 30S ribosomal subunit. Forms a loose heterodimer with protein S19. Forms two bridges to the 50S subunit in the 70S ribosome.

Located at the top of the head of the 30S subunit, it contacts several helices of the 16S rRNA. In the 70S ribosome it contacts the 23S rRNA (bridge B1a) and protein L5 of the 50S subunit (bridge B1b), connecting the 2 subunits; these bridges are implicated in subunit movement. Contacts the tRNAs in the A and P-sites. In Rickettsia bellii (strain OSU 85-389), this protein is Small ribosomal subunit protein uS13.